We begin with the raw amino-acid sequence, 604 residues long: MLARAGLLCASLSPPHAANPCCSNPCQNQGVCMSIGFDQYMCDCSRTGFYGENCSTPEFLTRVKLLLKPTPNTVHYILTHFKGVWNIVNKIPFLADVIMKYVRTSRSHCIEPPPTYNVHYAYKSWEAFSNLSYYTRALPPVADDCPTPMGVKGKKELPDSKEIVEKFLLRRKFIPDPQGTNMMFAFFAQHFTHQFFKTDHKRGPGFTKGLGHGVDLSHVYGETLDRQHKLRLFKDGKMKYQVIDGEVYPPTVKDTQVEMIYPPHVPEHLRFAVGQEVFGLVPGLMMYATIWLREHNRVCDVLKQEQGEWDDERLFRRSRLILIGETIKIVIEDYVRHLSGYHFSLKFDPELLFNQQFQYQNRIAAEFNTLYHWHPLLPDTLQIDDQEYNFQQFVYNNSILLEHGLTQFGESFSRQIAGRVAGGRNVPAAVQQEQRASIDQSRQMKYQSLNEYRKRFSVKPYASFEELTGEKEMAGELKALYQDIDAMELYPALLVEKPRPDAIFGETMVEIGAPFSLKGLMGNPICSPDYWKPSHFGGEVGFKIINTASIQSLICNNVKGCPFTAFSVQDPQLTKTVTINGSSSHSGLDDINPTVLLKERSTEL.

The N-terminal stretch at M1–A17 is a signal peptide. Residues A18–S55 form the EGF-like domain. 4 cysteine pairs are disulfide-bonded: C21–C32, C22–C145, C26–C42, and C44–C54. N-linked (GlcNAc...) asparagine glycosylation occurs at N53. Residue R106 coordinates substrate. N130 is a glycosylation site (N-linked (GlcNAc...) asparagine). H193 functions as the Proton acceptor in the catalytic mechanism. Y341 is a substrate binding site. The active-site For cyclooxygenase activity is the Y371. H374 is a heme b binding site. N-linked (GlcNAc...) asparagine glycosylation is present at N396. Position 526 is an S-nitrosocysteine (C526). Cysteines 555 and 561 form a disulfide. N-linked (GlcNAc...) asparagine glycosylation is present at N580.

It belongs to the prostaglandin G/H synthase family. Homodimer. The cofactor is heme b. Post-translationally, S-nitrosylation by NOS2 (iNOS) activates enzyme activity. S-nitrosylation may take place on different Cys residues in addition to Cys-526.

It is found in the microsome membrane. The protein resides in the endoplasmic reticulum membrane. The protein localises to the nucleus inner membrane. Its subcellular location is the nucleus outer membrane. It carries out the reaction (5Z,8Z,11Z,14Z)-eicosatetraenoate + AH2 + 2 O2 = prostaglandin H2 + A + H2O. The enzyme catalyses (5Z,8Z,11Z,14Z)-eicosatetraenoate + 2 O2 = prostaglandin G2. The catalysed reaction is prostaglandin G2 + AH2 = prostaglandin H2 + A + H2O. It catalyses the reaction (5Z,8Z,11Z,14Z,17Z)-eicosapentaenoate + 2 O2 = prostaglandin G3. It carries out the reaction prostaglandin G3 + AH2 = prostaglandin H3 + A + H2O. The enzyme catalyses (8Z,11Z,14Z)-eicosatrienoate + 2 O2 = prostaglandin G1. The catalysed reaction is prostaglandin G1 + AH2 = prostaglandin H1 + A + H2O. It catalyses the reaction 2-(5Z,8Z,11Z,14Z)-eicosatetraenoyl-sn-glycero-3-phosphoethanolamine + 2 O2 = 2-(prostaglandin G2)-sn-glycero-3-phosphoethanolamine. It carries out the reaction 2-(prostaglandin G2)-sn-glycero-3-phosphoethanolamine + AH2 = 2-(prostaglandin H2)-sn-glycero-3-phosphoethanolamine + A + H2O. The enzyme catalyses 2-(5Z,8Z,11Z,14Z)-eicosatetraenoyl-sn-glycero-3-phosphocholine + 2 O2 = 2-(prostaglandin G2)-sn-glycero-3-phosphocholine. The catalysed reaction is 2-(prostaglandin G2)-sn-glycero-3-phosphocholine + AH2 = 2-(prostaglandin H2)-sn-glycero-3-phosphocholine + A + H2O. It catalyses the reaction (15S)-hydroperoxy-(5Z,8Z,11Z,13E)-eicosatetraenoate + AH2 = (15S)-hydroxy-(5Z,8Z,11Z,13E)-eicosatetraenoate + A + H2O. It carries out the reaction 2-(5Z,8Z,11Z,14Z)-eicosatetraenoyl-sn-glycero-3-phosphocholine + AH2 + O2 = 2-[(15S)-hydroxy-(5Z,8Z,11Z,13E)-eicosatetraenoyl]-sn-glycero-3-phosphocholine + A + H2O. The enzyme catalyses 2-(5Z,8Z,11Z,14Z)-eicosatetraenoyl-sn-glycero-3-phosphocholine + AH2 + O2 = 2-[(15R)-hydroxy-(5Z,8Z,11Z,13E)-eicosatetraenoyl]-sn-glycero-3-phosphocholine + A + H2O. The catalysed reaction is 2-(5Z,8Z,11Z,14Z)-eicosatetraenoyl-sn-glycero-3-phosphocholine + AH2 + O2 = 2-[(11R)-hydroxy-(5Z,8Z,12E,14Z)-eicosatetraenoyl]-sn-glycero-3-phosphocholine + A + H2O. It catalyses the reaction (9Z,12Z)-octadecadienoate + AH2 + O2 = 9-hydroxy-(10E,12Z)-octadecadienoate + A + H2O. It carries out the reaction (9Z,12Z)-octadecadienoate + AH2 + O2 = 13-hydroxy-(9Z,11E)-octadecadienoate + A + H2O. The enzyme catalyses (5Z,8Z,11Z,14Z)-eicosatetraenoate + AH2 + O2 = (15R)-hydroxy-(5Z,8Z,11Z,13E)-eicosatetraenoate + A + H2O. The catalysed reaction is (5Z,8Z,11Z,14Z)-eicosatetraenoate + AH2 + O2 = (11R)-hydroxy-(5Z,8Z,12E,14Z)-eicosatetraenoate + A + H2O. It catalyses the reaction (5Z,8Z,11Z,14Z,17Z)-eicosapentaenoate + AH2 + O2 = (11R)-hydroxy-(5Z,8Z,12E,14Z,17Z)-eicosapentaenoate + A + H2O. It carries out the reaction (5Z,8Z,11Z,14Z,17Z)-eicosapentaenoate + AH2 + O2 = (18S)-hydroxy-(5Z,8Z,11Z,14Z,16E)-eicosapentaenoate + A + H2O. The enzyme catalyses (5Z,8Z,11Z,14Z,17Z)-eicosapentaenoate + AH2 + O2 = (18R)-hydroxy-(5Z,8Z,11Z,14Z,16E)-eicosapentaenoate + A + H2O. The catalysed reaction is (5Z,8Z,11Z,14Z,17Z)-eicosapentaenoate + AH2 + O2 = (15R)-hydroxy-(5Z,8Z,11Z,13E,17Z)-eicosapentaenoate + A + H2O. It catalyses the reaction (5Z,8Z,11Z,14Z,17Z)-eicosapentaenoate + AH2 + O2 = (15S)-hydroxy-(5Z,8Z,11Z,13E,17Z)-eicosapentaenoate + A + H2O. It carries out the reaction (7Z,10Z,13Z,16Z,19Z)-docosapentaenoate + AH2 + O2 = 13R-hydroxy-(7Z,10Z,14E,16Z,19Z)-docosapentaenoate + A + H2O. The enzyme catalyses (4Z,7Z,10Z,13Z,16Z,19Z)-docosahexaenoate + AH2 + O2 = 13-hydroxy-(4Z,7Z,10Z,14E,16Z,19Z)-docosahexaenoate + A + H2O. The catalysed reaction is (5S)-hydroxy-(6E,8Z,11Z,14Z)-eicosatetraenoate + AH2 + O2 = (5S,15R)-dihydroxy-(6E,8Z,11Z,13E)-eicosatetraenoate + A + H2O. It catalyses the reaction (4Z,7Z,10Z,13Z,16Z,19Z)-docosahexaenoate + AH2 + O2 = 17R-hydroxy-(4Z,7Z,10Z,13Z,15E,19Z)-docosahexaenoate + A + H2O. It carries out the reaction (5S)-hydroxy-(6E,8Z,11Z,14Z)-eicosatetraenoate + AH2 + O2 = (5S,15S)-dihydroxy-(6E,8Z,11Z,13E)-eicosatetraenoate + A + H2O. The enzyme catalyses (5S)-hydroxy-(6E,8Z,11Z,14Z)-eicosatetraenoate + AH2 + O2 = (5S,11R)-dihydroxy-(6E,8Z,12E,14Z)-eicosatetraenoate + A + H2O. The catalysed reaction is 2-(5Z,8Z,11Z,14Z-eicosatetraenoyl)-glycerol + 2 O2 = 2-glyceryl-prostaglandin G2. It catalyses the reaction 2-glyceryl-prostaglandin G2 + AH2 = 2-glyceryl-prostaglandin H2 + A + H2O. It carries out the reaction (5Z,8Z,11Z,14Z)-eicosatetraenoate + O2 = (15R)-hydroperoxy-(5Z,8Z,11Z,13E)-eicosatetraenoate. The enzyme catalyses (5Z,8Z,11Z,14Z)-eicosatetraenoate + O2 = 11R-hydroperoxy-(5Z,8Z,12E,14Z)-eicosatetraenoate. The catalysed reaction is (9Z,12Z)-octadecadienoate + AH2 + O2 = (9R)-hydroxy-(10E,12Z)-octadecadienoate + A + H2O. It catalyses the reaction (9Z,12Z)-octadecadienoate + AH2 + O2 = (9S)-hydroxy-(10E,12Z)-octadecadienoate + A + H2O. It carries out the reaction (9Z,12Z)-octadecadienoate + AH2 + O2 = (13S)-hydroxy-(9Z,11E)-octadecadienoate + A + H2O. The enzyme catalyses (9Z,12Z)-octadecadienoate + AH2 + O2 = (13R)-hydroxy-(9Z,11E)-octadecadienoate + A + H2O. The protein operates within lipid metabolism; prostaglandin biosynthesis. Its function is as follows. Dual cyclooxygenase and peroxidase in the biosynthesis pathway of prostanoids, a class of C20 oxylipins mainly derived from arachidonate ((5Z,8Z,11Z,14Z)-eicosatetraenoate, AA, C20:4(n-6)), with a particular role in the inflammatory response. The cyclooxygenase activity oxygenates AA to the hydroperoxy endoperoxide prostaglandin G2 (PGG2), and the peroxidase activity reduces PGG2 to the hydroxy endoperoxide prostaglandin H2 (PGH2), the precursor of all 2-series prostaglandins and thromboxanes. This complex transformation is initiated by abstraction of hydrogen at carbon 13 (with S-stereochemistry), followed by insertion of molecular O2 to form the endoperoxide bridge between carbon 9 and 11 that defines prostaglandins. The insertion of a second molecule of O2 (bis-oxygenase activity) yields a hydroperoxy group in PGG2 that is then reduced to PGH2 by two electrons. Similarly catalyzes successive cyclooxygenation and peroxidation of dihomo-gamma-linoleate (DGLA, C20:3(n-6)) and eicosapentaenoate (EPA, C20:5(n-3)) to corresponding PGH1 and PGH3, the precursors of 1- and 3-series prostaglandins. In an alternative pathway of prostanoid biosynthesis, converts 2-arachidonoyl lysophopholipids to prostanoid lysophopholipids, which are then hydrolyzed by intracellular phospholipases to release free prostanoids. Metabolizes 2-arachidonoyl glycerol yielding the glyceryl ester of PGH2, a process that can contribute to pain response. Generates lipid mediators from n-3 and n-6 polyunsaturated fatty acids (PUFAs) via a lipoxygenase-type mechanism. Oxygenates PUFAs to hydroperoxy compounds and then reduces them to corresponding alcohols. Plays a role in the generation of resolution phase interaction products (resolvins) during both sterile and infectious inflammation. Metabolizes docosahexaenoate (DHA, C22:6(n-3)) to 17R-HDHA, a precursor of the D-series resolvins (RvDs). As a component of the biosynthetic pathway of E-series resolvins (RvEs), converts eicosapentaenoate (EPA, C20:5(n-3)) primarily to 18S-HEPE that is further metabolized by ALOX5 and LTA4H to generate 18S-RvE1 and 18S-RvE2. In vascular endothelial cells, converts docosapentaenoate (DPA, C22:5(n-3)) to 13R-HDPA, a precursor for 13-series resolvins (RvTs) shown to activate macrophage phagocytosis during bacterial infection. In activated leukocytes, contributes to oxygenation of hydroxyeicosatetraenoates (HETE) to diHETES (5,15-diHETE and 5,11-diHETE). Can also use linoleate (LA, (9Z,12Z)-octadecadienoate, C18:2(n-6)) as substrate and produce hydroxyoctadecadienoates (HODEs) in a regio- and stereospecific manner, being (9R)-HODE ((9R)-hydroxy-(10E,12Z)-octadecadienoate) and (13S)-HODE ((13S)-hydroxy-(9Z,11E)-octadecadienoate) its major products. During neuroinflammation, plays a role in neuronal secretion of specialized preresolving mediators (SPMs) 15R-lipoxin A4 that regulates phagocytic microglia. The protein is Prostaglandin G/H synthase 2 (PTGS2) of Neovison vison (American mink).